We begin with the raw amino-acid sequence, 277 residues long: Small ribosomal subunit protein uS3 (277 aa).

The 69-residue stretch at 43-111 (IRKVMNKDLE…QVQLNIFEVK (69 aa)) folds into the KH type-2 domain. Residues 216-277 (FEEQQAQQGN…EAAVEPETKE (62 aa)) are disordered. Positions 264-277 (EVSKEAAVEPETKE) are enriched in basic and acidic residues.

Belongs to the universal ribosomal protein uS3 family. Part of the 30S ribosomal subunit. Forms a tight complex with proteins S10 and S14.

Its function is as follows. Binds the lower part of the 30S subunit head. Binds mRNA in the 70S ribosome, positioning it for translation. This is Small ribosomal subunit protein uS3 from Bifidobacterium animalis subsp. lactis (strain AD011).